Consider the following 201-residue polypeptide: Superoxide dismutase [Mn/Fe] (201 aa).

Fe(3+)-binding residues include histidine 27, histidine 75, aspartate 161, and histidine 165. Positions 27, 75, 161, and 165 each coordinate Mn(2+).

The protein belongs to the iron/manganese superoxide dismutase family. As to quaternary structure, homotetramer. Mn(2+) serves as cofactor. Requires Fe(3+) as cofactor.

The catalysed reaction is 2 superoxide + 2 H(+) = H2O2 + O2. Its activity is regulated as follows. Shows decreasing activity with increasing pH. Slightly inhibited by azide and fluoride at pH 7-8; the inhibition is drastically increased towards lower pH. In terms of biological role, destroys superoxide anion radicals which are normally produced within the cells and which are toxic to biological systems. Catalyzes the dismutation of superoxide anion radicals into O2 and H2O2 by successive reduction and oxidation of the transition metal ion at the active site. This Propionibacterium freudenreichii subsp. shermanii protein is Superoxide dismutase [Mn/Fe] (sodA).